The following is a 52-amino-acid chain: Transmembrane protein ORF52 (52 aa).

2 helical membrane-spanning segments follow: residues 11–31 (AFLGVLNALAPIIEGATEIIT) and 32–52 (FMALTYVMTMVIARILGGLFV).

It is found in the host membrane. This Acidianus filamentous virus 1 (isolate United States/Yellowstone) (AFV-1) protein is Transmembrane protein ORF52.